Consider the following 60-residue polypeptide: Potassium channel toxin alpha-KTx 3.6 (60 aa).

The first 22 residues, 1–22, serve as a signal peptide directing secretion; the sequence is MKVFFAVLITLFICSMIIGIHG. 3 cysteine pairs are disulfide-bonded: C29–C49, C35–C54, and C39–C56. K59 bears the Lysine amide mark.

Belongs to the short scorpion toxin superfamily. Potassium channel inhibitor family. Alpha-KTx 03 subfamily. In terms of tissue distribution, expressed by the venom gland.

Its subcellular location is the secreted. Blocks voltage-gated potassium channels. At 2 uM, blocks rat Kv1.1/KCNA1 and Kv1.3/KCNA3, has a strong effect on rat Kv1.2/KCNA2 and Kv1.6/KCNA6 as well as a moderate effect on Shaker IR. This is Potassium channel toxin alpha-KTx 3.6 from Olivierus martensii (Manchurian scorpion).